The sequence spans 356 residues: MNAARTGYRVFSANSTAACTELAKRITERLGAELGKSVVYQETNGETRVEIKESVRGQDIFIIQTIPRDVNTAVMELLIMAYALKTACARNIIGVIPYFPYSKQSKMRKRGSIVCKLLASMLAKAGLTHIITMDLHQKEIQGFFSFPVDNLRASPFLLQYIQEEIPNYRNAVIVAKSPDAAKRAQSYAERLRLGLAVIHGEAQCTELDMDDGRHSPPMVKNATVHPGLELPLMMAKEKPPITVVGDVGGRIAIIVDDIIDDVESFVAAAEILKERGAYKIYVMATHGILSAEAPRLIEESPIDEVVVTNTVPHELQKLQCPKIKTVDISLILSEAIRRIHNGESMAYLFRNITVDD.

Position 1 is an N-acetylmethionine (methionine 1). 2 positions are modified to phosphoserine: serine 177 and serine 215.

The protein belongs to the ribose-phosphate pyrophosphokinase family. Binds to PRPS1 and PRPS2.

Functionally, seems to play a negative regulatory role in 5-phosphoribose 1-diphosphate synthesis. This is Phosphoribosyl pyrophosphate synthase-associated protein 1 (Prpsap1) from Mus musculus (Mouse).